A 258-amino-acid chain; its full sequence is Triosephosphate isomerase (258 aa).

9 to 11 (NWK) lines the substrate pocket. Catalysis depends on histidine 95, which acts as the Electrophile. The Proton acceptor role is filled by glutamate 167. Residues glycine 173 and serine 212 each contribute to the substrate site.

Belongs to the triosephosphate isomerase family. As to quaternary structure, homodimer.

It is found in the cytoplasm. It carries out the reaction D-glyceraldehyde 3-phosphate = dihydroxyacetone phosphate. Its pathway is carbohydrate biosynthesis; gluconeogenesis. It participates in carbohydrate degradation; glycolysis; D-glyceraldehyde 3-phosphate from glycerone phosphate: step 1/1. Functionally, involved in the gluconeogenesis. Catalyzes stereospecifically the conversion of dihydroxyacetone phosphate (DHAP) to D-glyceraldehyde-3-phosphate (G3P). The polypeptide is Triosephosphate isomerase (Blochmanniella pennsylvanica (strain BPEN)).